The sequence spans 193 residues: PXMP2/4 family protein 2 (193 aa).

4 helical membrane-spanning segments follow: residues 56-78 (VATM…YRSL), 96-116 (IDQL…TNFI), 132-152 (LFYA…INFS), and 160-180 (VLYS…ISFD).

Belongs to the peroxisomal membrane protein PXMP2/4 family.

Its subcellular location is the membrane. The protein is PXMP2/4 family protein 2 of Dictyostelium discoideum (Social amoeba).